The sequence spans 171 residues: 16S rRNA aminocarboxypropyltransferase (171 aa).

Residues Thr17, Leu67, Leu90, and Thr109 each coordinate S-adenosyl-L-methionine.

This sequence belongs to the TDD superfamily. TSR3 family.

It localises to the cytoplasm. It catalyses the reaction an N(1)-methylpseudouridine in rRNA + S-adenosyl-L-methionine = N(1)-methyl-N(3)-[(3S)-3-amino-3-carboxypropyl]pseudouridine in rRNA + S-methyl-5'-thioadenosine + H(+). Aminocarboxypropyltransferase that catalyzes the aminocarboxypropyl transfer on pseudouridine corresponding to position 914 in M.jannaschii 16S rRNA. It constitutes the last step in biosynthesis of the hypermodified N1-methyl-N3-(3-amino-3-carboxypropyl) pseudouridine (m1acp3-Psi). The sequence is that of 16S rRNA aminocarboxypropyltransferase from Methanobrevibacter smithii (strain ATCC 35061 / DSM 861 / OCM 144 / PS).